The chain runs to 680 residues: Zinc finger protein OBI1 (680 aa).

In terms of domain architecture, KRAB spans 16–87 (VSFEDVAVDF…AEATEQCLPG (72 aa)). The C2H2-type 1; degenerate zinc-finger motif lies at 263 to 280 (CHKIFPNKTELSNHDAMH). 8 C2H2-type zinc fingers span residues 455–477 (FRCN…QRMH), 483–505 (HECK…QGIH), 511–533 (YECN…ERTH), 539–561 (FECK…QKIH), 567–589 (HKCK…QKTH), 595–617 (YECK…ETTH), 623–645 (YECK…QVIH), and 651–673 (FECK…QKIH).

Polyubiquitinated, leading to its degradation via the ubiquitin-proteasome pathway. In terms of tissue distribution, expressed during osteogenic differentiation where levels increase from the first days of differentiation and remain high during the whole process. Highly expressed in lung.

It is found in the nucleus. May modulate osteogenic differentiation, at least in part, through the bone morphogenetic protein (BMP) signaling pathway, increasing RUNX2 activation and leading to osteoblast commitment and maturation. The chain is Zinc finger protein OBI1 (ObI1) from Mus musculus (Mouse).